The primary structure comprises 273 residues: Putative phosphoenolpyruvate synthase regulatory protein (273 aa).

153–160 (AVSRAGKT) provides a ligand contact to ADP.

This sequence belongs to the pyruvate, phosphate/water dikinase regulatory protein family. PSRP subfamily.

The catalysed reaction is [pyruvate, water dikinase] + ADP = [pyruvate, water dikinase]-phosphate + AMP + H(+). It carries out the reaction [pyruvate, water dikinase]-phosphate + phosphate + H(+) = [pyruvate, water dikinase] + diphosphate. In terms of biological role, bifunctional serine/threonine kinase and phosphorylase involved in the regulation of the phosphoenolpyruvate synthase (PEPS) by catalyzing its phosphorylation/dephosphorylation. This chain is Putative phosphoenolpyruvate synthase regulatory protein, found in Stenotrophomonas maltophilia (strain K279a).